Reading from the N-terminus, the 396-residue chain is Penicillopepsin-1 (396 aa).

Positions 1 to 20 are cleaved as a signal peptide; that stretch reads MVVFSKVTASLACFSAVVSA. A propeptide spans 21–72 (activation peptide); it reads AAVPVKSPRQGFSVNQVQKTVTGTRTVNLPGVYANALAKYGATVPANVHAAA. The 306-residue stretch at 88–393 folds into the Peptidase A1 domain; it reads YLTPVKIGES…DAEGPRLGFA (306 aa). Active-site residues include aspartate 104 and aspartate 285. Asparagine 311 carries N-linked (GlcNAc...) asparagine glycosylation. Cysteine 321 and cysteine 356 are oxidised to a cystine.

This sequence belongs to the peptidase A1 family. As to quaternary structure, monomer.

The protein resides in the secreted. It carries out the reaction Hydrolysis of proteins with broad specificity similar to that of pepsin A, preferring hydrophobic residues at P1 and P1', but also cleaving 20-Gly-|-Glu-21 in the B chain of insulin. Clots milk, and activates trypsinogen.. In terms of biological role, secreted aspartic endopeptidase that allows assimilation of proteinaceous substrates. The scissile peptide bond is attacked by a nucleophilic water molecule activated by two aspartic residues in the active site. Shows a broad primary substrate specificity. Favors hydrophobic residues at the P1 and P1' positions, but can also activate trypsinogen and hydrolyze the B chain of insulin between positions 'Gly-20' and 'Glu-21'. In Penicillium rubens (strain ATCC 28089 / DSM 1075 / NRRL 1951 / Wisconsin 54-1255) (Penicillium chrysogenum), this protein is Penicillopepsin-1 (pepA).